Consider the following 378-residue polypeptide: Erythronate-4-phosphate dehydrogenase (378 aa).

Substrate is bound by residues S45 and T66. NAD(+)-binding residues include D146 and T175. R208 is a catalytic residue. D232 is a binding site for NAD(+). E237 is a catalytic residue. H254 functions as the Proton donor in the catalytic mechanism. G257 is an NAD(+) binding site. Y258 contacts substrate.

This sequence belongs to the D-isomer specific 2-hydroxyacid dehydrogenase family. PdxB subfamily. Homodimer.

The protein localises to the cytoplasm. It carries out the reaction 4-phospho-D-erythronate + NAD(+) = (R)-3-hydroxy-2-oxo-4-phosphooxybutanoate + NADH + H(+). The protein operates within cofactor biosynthesis; pyridoxine 5'-phosphate biosynthesis; pyridoxine 5'-phosphate from D-erythrose 4-phosphate: step 2/5. Catalyzes the oxidation of erythronate-4-phosphate to 3-hydroxy-2-oxo-4-phosphonooxybutanoate. The chain is Erythronate-4-phosphate dehydrogenase from Salmonella arizonae (strain ATCC BAA-731 / CDC346-86 / RSK2980).